Reading from the N-terminus, the 397-residue chain is MKKKGLKKTFFVIASLVMGFTLYGYTPVSADAASVKGYYHTQGNKIVDESGKEAAFNGLNWFGLETPNYTLHGLWSRSMDDMLDQVKKEGYNLIRLPYSNQLFDSSSRPDSIDYHKNPDLVGLNPIQIMDKLIEKAGQRGIQIILDRHRPGSGGQSELWYTSQYPESRWISDWKMLADRYKNNPTVIGADLHNEPHGQASWGTGNASTDWRLAAQRAGNAILSVNPNWLILVEGVDHNVQGNNSQYWWGGNLTGVANYPVVLDVPNRVVYSPHDYGPGVSSQPWFNDPAFPSNLPAIWDQTWGYISKQNIAPVLVGEFGGRNVDLSCPEGKWQNALVHYIGANNLYFTYWSLNPNSGDTGGLLLDDWTTWNRPKQDMLGRIMKPVVSVAQQAEAAAE.

Residue E194 is the Proton donor of the active site. E317 functions as the Nucleophile in the catalytic mechanism.

This sequence belongs to the glycosyl hydrolase 5 (cellulase A) family.

The catalysed reaction is Endohydrolysis of (1-&gt;4)-beta-D-glucosidic linkages in cellulose, lichenin and cereal beta-D-glucans.. This is Endoglucanase from Paenibacillus polymyxa (Bacillus polymyxa).